A 127-amino-acid chain; its full sequence is Large ribosomal subunit protein bL21 (127 aa).

Positions 102-127 (TDNAKPTKGPRPKKAKAEAPAADAAE) are disordered.

It belongs to the bacterial ribosomal protein bL21 family. In terms of assembly, part of the 50S ribosomal subunit. Contacts protein L20.

Its function is as follows. This protein binds to 23S rRNA in the presence of protein L20. The chain is Large ribosomal subunit protein bL21 from Bradyrhizobium sp. (strain BTAi1 / ATCC BAA-1182).